A 170-amino-acid polypeptide reads, in one-letter code: Ureidoglycolate lyase (170 aa).

This sequence belongs to the ureidoglycolate lyase family. As to quaternary structure, homodimer. Ni(2+) serves as cofactor.

The enzyme catalyses (S)-ureidoglycolate = urea + glyoxylate. The protein operates within nitrogen metabolism; (S)-allantoin degradation. In terms of biological role, catalyzes the catabolism of the allantoin degradation intermediate (S)-ureidoglycolate, generating urea and glyoxylate. Involved in the utilization of allantoin as nitrogen source. The polypeptide is Ureidoglycolate lyase (Pseudomonas syringae pv. tomato (strain ATCC BAA-871 / DC3000)).